Here is a 370-residue protein sequence, read N- to C-terminus: Chorismate synthase (370 aa).

R48 contributes to the NADP(+) binding site. FMN contacts are provided by residues 125–127, 241–242, G285, 300–304, and R326; these read RSS, NA, and KPTSS.

The protein belongs to the chorismate synthase family. In terms of assembly, homotetramer. It depends on FMNH2 as a cofactor.

It catalyses the reaction 5-O-(1-carboxyvinyl)-3-phosphoshikimate = chorismate + phosphate. It functions in the pathway metabolic intermediate biosynthesis; chorismate biosynthesis; chorismate from D-erythrose 4-phosphate and phosphoenolpyruvate: step 7/7. In terms of biological role, catalyzes the anti-1,4-elimination of the C-3 phosphate and the C-6 proR hydrogen from 5-enolpyruvylshikimate-3-phosphate (EPSP) to yield chorismate, which is the branch point compound that serves as the starting substrate for the three terminal pathways of aromatic amino acid biosynthesis. This reaction introduces a second double bond into the aromatic ring system. This Jannaschia sp. (strain CCS1) protein is Chorismate synthase.